The following is a 281-amino-acid chain: Acetyl-coenzyme A carboxylase carboxyl transferase subunit beta (281 aa).

One can recognise a CoA carboxyltransferase N-terminal domain in the interval 23 to 281 (LWSKCEDCGA…KTLAMMRVEG (259 aa)). Zn(2+) is bound by residues Cys27, Cys30, Cys46, and Cys49. A C4-type zinc finger spans residues 27–49 (CEDCGAMLHRRQLEENLNTCNEC).

This sequence belongs to the AccD/PCCB family. As to quaternary structure, acetyl-CoA carboxylase is a heterohexamer composed of biotin carboxyl carrier protein (AccB), biotin carboxylase (AccC) and two subunits each of ACCase subunit alpha (AccA) and ACCase subunit beta (AccD). The cofactor is Zn(2+).

The protein localises to the cytoplasm. It carries out the reaction N(6)-carboxybiotinyl-L-lysyl-[protein] + acetyl-CoA = N(6)-biotinyl-L-lysyl-[protein] + malonyl-CoA. The protein operates within lipid metabolism; malonyl-CoA biosynthesis; malonyl-CoA from acetyl-CoA: step 1/1. In terms of biological role, component of the acetyl coenzyme A carboxylase (ACC) complex. Biotin carboxylase (BC) catalyzes the carboxylation of biotin on its carrier protein (BCCP) and then the CO(2) group is transferred by the transcarboxylase to acetyl-CoA to form malonyl-CoA. This is Acetyl-coenzyme A carboxylase carboxyl transferase subunit beta from Chlorobium luteolum (strain DSM 273 / BCRC 81028 / 2530) (Pelodictyon luteolum).